We begin with the raw amino-acid sequence, 69 residues long: Toxin CSTX-11 (69 aa).

4 cysteine pairs are disulfide-bonded: cysteine 6-cysteine 21, cysteine 13-cysteine 30, cysteine 20-cysteine 47, and cysteine 32-cysteine 45.

In terms of tissue distribution, expressed by the venom gland.

Its subcellular location is the secreted. It is found in the target cell membrane. Spider venom toxin that shows calcium channel blocking activity and exhibits cytolytic activity by affecting the outer leaflet curvature and/or pore formation across the membrane. It blocks L-type calcium channels (Cav1/CACNA1) in mammalian neurons at nanomolar concentrations. Furthermore, it produces a slow voltage-independent block of mid/low and high voltage-activated calcium channels in cockroach neurons. Potassium ions, histamine, M-ctenitoxin-Cs1a (AC P83619), CSTX-9 (AC P58604), and CSTX-13 (AC P83919) synergistically increase the insecticidal activity of this toxin. In vivo, it causes paralysis in blow flies and provokes death in drosophila. This chain is Toxin CSTX-11, found in Cupiennius salei (American wandering spider).